Reading from the N-terminus, the 172-residue chain is Diphosphoinositol polyphosphate phosphohydrolase 1 (172 aa).

M1 bears the N-acetylmethionine mark. Substrate is bound by residues R10, 18 to 20 (KKR), and 39 to 41 (SSR). The 126-residue stretch at 17-142 (YKKRAACLCF…KPVQASYFET (126 aa)) folds into the Nudix hydrolase domain. G50 and E66 together coordinate Mg(2+). Positions 51 to 72 (GGMEPEEEPSVAAVREVCEEAG) match the Nudix box motif. The active-site Proton acceptor is the E69. E70 is a Mg(2+) binding site. Residues 89 to 91 (RKH), R115, and K133 each bind substrate.

Belongs to the Nudix hydrolase family. DIPP subfamily. Monomer. The cofactor is Mg(2+). Requires Mn(2+) as cofactor. It depends on Zn(2+) as a cofactor. In terms of tissue distribution, widely expressed. Expressed at higher level in brain, heart, pancreas and liver. Also expressed in placenta, lung and kidney.

The protein resides in the cytoplasm. It localises to the nucleus. The enzyme catalyses diphospho-myo-inositol polyphosphate + H2O = myo-inositol polyphosphate + phosphate.. The catalysed reaction is 5-diphospho-1D-myo-inositol 1,2,3,4,6-pentakisphosphate + H2O = 1D-myo-inositol hexakisphosphate + phosphate + H(+). It carries out the reaction 3,5-bis(diphospho)-1D-myo-inositol 1,2,4,6-tetrakisphosphate + H2O = 3-diphospho-1D-myo-inositol 1,2,4,5,6-pentakisphosphate + phosphate + 2 H(+). It catalyses the reaction [phosphate](n+1) + n H2O = (n+1) phosphate + n H(+). The enzyme catalyses P(1),P(5)-bis(5'-adenosyl) pentaphosphate + H2O = ADP + ATP + 2 H(+). The catalysed reaction is P(1),P(6)-bis(5'-adenosyl) hexaphosphate + H2O = 2 ATP + 2 H(+). It carries out the reaction P(1),P(4)-bis(5'-adenosyl) tetraphosphate + H2O = AMP + ATP + 2 H(+). It catalyses the reaction a 5'-end (N(7)-methyl 5'-triphosphoguanosine)-ribonucleoside in mRNA + H2O = N(7)-methyl-GMP + a 5'-end diphospho-ribonucleoside in mRNA + 2 H(+). The enzyme catalyses a 5'-end (N(7)-methyl 5'-triphosphoguanosine)-ribonucleoside in mRNA + H2O = N(7)-methyl-GDP + a 5'-end phospho-ribonucleoside in mRNA + 2 H(+). Its activity is regulated as follows. Endopolyphospahatase activity is inhibited by NaF, NaPPi, beta-glycerol phosphate and heparin. 5-diphosphoinositol pentakisphosphate (5-InsP7) inhibits its mRNA decapping activity. Functionally, cleaves a beta-phosphate from the diphosphate groups in PP-InsP5 (diphosphoinositol pentakisphosphate) and [PP]2-InsP4 (bisdiphosphoinositol tetrakisphosphate), suggesting that it may play a role in signal transduction. InsP6 (inositol hexakisphosphate) is not a substrate. Acts as a negative regulator of the ERK1/2 pathway. Also able to catalyze the hydrolysis of dinucleoside oligophosphates, with diadenosine 5',5'''-P1,P6-hexaphosphate (Ap6A) and diadenosine 5',5'''- P1,P5-pentaphosphate (Ap5A) being the preferred substrates. The major reaction products are ADP and p4a from Ap6A and ADP and ATP from Ap5A. Also able to hydrolyze 5-phosphoribose 1-diphosphate. Acts as a decapping enzyme that modulates the stability of a subset of mRNAs implicated in cell motility. Hydrolyzes monomethylated capped RNA after both the alpha- and beta-phosphates generating m7GMP + ppRNA and m7GDP + pRNA. Can hydrolyze unmethylated capped RNAs. Divalent cations zinc, magnesium and manganese determine its substrate specificity. Exhibits diphosphoinositol polyphosphate phosphohydrolase in the presence of magnesium ions, diadenosine hexaphosphate hydrolase activity in the presence of manganese ions and endopolyphosphatase activity in the presence of zinc ions. Plays an important role in limiting DNA damage and maintaining cell survival upon oxidative stress via its endopolyphosphatase activity. This is Diphosphoinositol polyphosphate phosphohydrolase 1 from Homo sapiens (Human).